The following is a 481-amino-acid chain: Sucrose phosphorylase (481 aa).

Sucrose contacts are provided by residues Asp49, His87, Arg191–Asp193, Glu234, His291–Asp292, Asp335–Gln338, and Arg392. The active-site Nucleophile is the Asp193. Residue Glu234 is the Proton donor of the active site.

It belongs to the glycosyl hydrolase 13 family. Sucrose phosphorylase subfamily.

It localises to the cytoplasm. The catalysed reaction is sucrose + phosphate = D-fructose + alpha-D-glucose 1-phosphate. Intracellular catabolism of sucrose. Being intracellular, probably not involved in synthesis of extracellular polysaccharides. This is Sucrose phosphorylase from Streptococcus mutans serotype c (strain ATCC 700610 / UA159).